Here is a 520-residue protein sequence, read N- to C-terminus: Developmental regulatory protein wetA (520 aa).

Polar residues-rich tracts occupy residues 109–118, 155–165, and 378–392; these read TATHALSISP, QSFSPSLMRSS, and SSQK…SQVH. 3 disordered regions span residues 109–165, 378–454, and 468–496; these read TATH…MRSS, SSQK…SNKS, and KKIL…RRRK. A compositionally biased stretch (basic residues) spans 420-429; that stretch reads PTHRRTHSRK. Over residues 445 to 454 the composition is skewed to low complexity; the sequence is SSSSRGSNKS.

It belongs to the wetA family.

Functionally, brlA, abaA and wetA are pivotal regulators of conidiophore development and conidium maturation. They act individually and together to regulate their own expression and that of numerous other sporulation-specific genes. The polypeptide is Developmental regulatory protein wetA (Penicillium roqueforti (strain FM164)).